Reading from the N-terminus, the 160-residue chain is Ureidoglycolate lyase (160 aa).

The protein belongs to the ureidoglycolate lyase family. As to quaternary structure, homodimer. It depends on Ni(2+) as a cofactor.

The catalysed reaction is (S)-ureidoglycolate = urea + glyoxylate. It participates in nitrogen metabolism; (S)-allantoin degradation. Its function is as follows. Catalyzes the catabolism of the allantoin degradation intermediate (S)-ureidoglycolate, generating urea and glyoxylate. Involved in the anaerobic utilization of allantoin as sole nitrogen source. Reinforces the induction of genes involved in the degradation of allantoin and glyoxylate by producing glyoxylate. The polypeptide is Ureidoglycolate lyase (Escherichia coli (strain K12 / MC4100 / BW2952)).